The chain runs to 88 residues: Small ribosomal subunit protein bS20 (88 aa).

The interval 1 to 25 (MANSAQARKRARQATKARAHNASLR) is disordered. Residues 7 to 19 (ARKRARQATKARA) are compositionally biased toward basic residues.

This sequence belongs to the bacterial ribosomal protein bS20 family.

In terms of biological role, binds directly to 16S ribosomal RNA. This chain is Small ribosomal subunit protein bS20, found in Azoarcus sp. (strain BH72).